The primary structure comprises 1081 residues: MAPRKRNSRGVSFIFCCFRSSEHPEITYRLRNDSNFALQSMEPALPVPPVEELDAMFAELVDELDLSEKHREAMFALSAEKKWQIYCSKKKDHEEGATSWPEFYIDQLNSMAARRTLFAMDKEDEEERNKTIESLKTALRTKPMRFVTRFIDLDGLTCILNFLKSMDYEIAESQIHTSLIGCIKALMNNSQGRAHVLAHTESINVIAQSLATENIKTKVAVLEIMGAVCLVPGGHKKVLEAMLHYQRYASERTRFQTLINDLDRSTGRYRDEVSLKTAIMSFINAVLSQGAGVESLDFRLHLRYEFLMLGIQPVIDKLREHENSTLDRHLDFFEMLRNEDELEFAKRFDLVHIDTKSATQMFELIRKRLTHTESYPHFTSILHHCLQMPYKRSGNTVHYWLLLDRIVQQIVIQNEKGQDPDTSPLENFNVKNVVRMLVNENEVKQWKEQAEKMRKEHNELQQKLEKKERECDAKTQEKEEMMQTLNKMKEKLEKETTEYKNVKQQVAELTAQIQELNSRTVCAPGPGGPPPPPGAPGGPMSMPSGNFMPPPPPPPPPFPGGMAPPPPPPPPPPPPPGGPPPPPGLPLLGAAPPGAPLGLSMKKKNIPQPKNPLKSFNWSKLPDNKLEGTLWIDLDDAKVLKILDLEDIERTFSAYQRQQDFFVNNGIKQKEMDCTDDTLSSKMKVKELSVVDGRRAQNCNILLSRLKLTNEEIKRAILTMDEQEDLPKDMLEQLLKFVPEKSDIDLLEEHKHELDRMAKADRFLFEMSRINHYQQRLQSLYFKKKFAERVAEVKPKVEAIRDASKEVLQSKNLKQLLEVVLAFGNYMNKGQRGNAYGFKISSLNKIADTKSSIDKNITLLHYLITVVEKKYPKIVNLHEELQTISVAAKVNMTELEKEISALRNGLKSVENELEYQKTQPTLPGDKFVSVVSQFITVAGFSFCDVEDLLSEAKELFVKSAKRFGEETNKIQPDEFFGIFDQFLQAFLEAKQENENIRKRKEEEERRIRMEAQLKEQRERERKARKAKENGEEEGEFDDLVSALRSGEVFDKDLSKLKRNRKRIVSQTTESSRERPVTKLNY.

The GBD/FH3 domain maps to 45–418 (LPVPPVEELD…QIVIQNEKGQ (374 aa)). Disordered stretches follow at residues 455–476 (KEHNELQQKLEKKERECDAKTQ) and 519–615 (RTVC…PLKS). Residues 526 to 536 (PGGPPPPPGAP) are compositionally biased toward pro residues. Positions 538–547 (GPMSMPSGNF) are enriched in low complexity. The span at 548-585 (MPPPPPPPPPFPGGMAPPPPPPPPPPPPPGGPPPPPGL) shows a compositional bias: pro residues. The segment covering 586–600 (PLLGAAPPGAPLGLS) has biased composition (low complexity). Positions 603 to 1012 (KKNIPQPKNP…EERRIRMEAQ (410 aa)) constitute an FH2 domain. The segment at 696–705 (AQNCNILLSR) is actin-binding. Basic and acidic residues predominate over residues 1013–1029 (LKEQRERERKARKAKEN). 2 disordered regions span residues 1013-1038 (LKEQRERERKARKAKENGEEEGEFDD) and 1060-1081 (RKRIVSQTTESSRERPVTKLNY). The 32-residue stretch at 1030–1061 (GEEEGEFDDLVSALRSGEVFDKDLSKLKRNRK) folds into the DAD domain. A compositionally biased stretch (basic and acidic residues) spans 1070–1081 (SSRERPVTKLNY).

It localises to the cytoplasm. Its subcellular location is the cytoskeleton. The protein localises to the cilium basal body. Functionally, binds to disheveled (dsh) and Rho, and mediates Wnt-induced dsh-Rho complex formation during gastrulation. May play a role as a scaffolding protein to recruit Rho-GDP and Rho-GEF, thereby enhancing Rho-GTP formation. Can direct nucleation and elongation of new actin filaments. Involved in building functional cilia. Involved in building functional cilia. Involved in the organization of the subapical actin network in multiciliated epithelial cells. The polypeptide is Disheveled-associated activator of morphogenesis 1-A (daam1-a) (Xenopus laevis (African clawed frog)).